The chain runs to 135 residues: Small ribosomal subunit protein bS6 (135 aa).

Residues 99–120 (QHSSLGRSTAPANPMASNTPRT) are compositionally biased toward polar residues. A disordered region spans residues 99 to 135 (QHSSLGRSTAPANPMASNTPRTEGQEQAKTEPQTAPA).

The protein belongs to the bacterial ribosomal protein bS6 family.

Binds together with bS18 to 16S ribosomal RNA. This Synechococcus sp. (strain RCC307) protein is Small ribosomal subunit protein bS6.